The sequence spans 930 residues: Inter-alpha-trypsin inhibitor heavy chain H4 (930 aa).

The first 28 residues, 1 to 28 (MKPPRPVRTCSKVLVLLSLLAIHQTTTA), serve as a signal peptide directing secretion. The 120-residue stretch at 29-148 (EKNGIDIYSL…KITFELVYEE (120 aa)) folds into the VIT domain. N-linked (GlcNAc...) asparagine glycans are attached at residues Asn-81 and Asn-207. Residues 272–432 (PKNVVFVIDK…YAFLEKLALD (161 aa)) enclose the VWFA domain. Residue Asn-274 is glycosylated (N-linked (GlcNAc...) asparagine; atypical). 2 N-linked (GlcNAc...) asparagine glycosylation sites follow: Asn-517 and Asn-577. Residues 595-618 (KPDDQEQSQVAEKPMEGESRNRNV) form a disordered region. The tract at residues 658–688 (MNFRPGVLSSRQLGLPGPPDVPDHAAYHPFR) is proline-rich (PRR) potential bioactive peptide. Positions 662–688 (PGVLSSRQLGLPGPPDVPDHAAYHPFR) are cleaved as a propeptide — potentially active peptide. Residues Thr-719, Thr-720, and Thr-722 are each glycosylated (O-linked (GalNAc...) threonine). An O-glycosylated at three sites region spans residues 719-725 (TTMTTQT). Cysteines 747 and 925 form a disulfide.

Belongs to the ITIH family. As to quaternary structure, interacts (via C-terminus) with DNAJC1 (via SANT 2 domain); this interaction protects ITIH4 against cleavage by kallikrein in vitro. Post-translationally, cleaved by plasma kallikrein to yield 100 kDa and 35 kDa fragments, and the resulting 100 kDa fragment is further converted to a 70 kDa fragment. In terms of processing, N- and O-glycosylated. In urine, O-linked glycosylation on threonine residues in the region from Thr-719 to Thr-725 consists of core 1 or possibly core 8 glycans. Mainly Hex(HexNAc)(2), but also some Hex(3)(HexNAc)(3). N-glycosylated but not O-glycosylated in plasma. Liver specific.

The protein localises to the secreted. Type II acute-phase protein (APP) involved in inflammatory responses to trauma. May also play a role in liver development or regeneration. This Homo sapiens (Human) protein is Inter-alpha-trypsin inhibitor heavy chain H4 (ITIH4).